The chain runs to 493 residues: 3-octaprenyl-4-hydroxybenzoate carboxy-lyase (493 aa).

Residue Asn-172 participates in Mn(2+) binding. Residues 175–177 (IYR), 189–191 (RWL), and 194–195 (RG) each bind prenylated FMN. Position 238 (Glu-238) interacts with Mn(2+). The active-site Proton donor is Asp-287.

It belongs to the UbiD family. Homohexamer. Requires prenylated FMN as cofactor. It depends on Mn(2+) as a cofactor.

The protein resides in the cell membrane. It carries out the reaction a 4-hydroxy-3-(all-trans-polyprenyl)benzoate + H(+) = a 2-(all-trans-polyprenyl)phenol + CO2. Its pathway is cofactor biosynthesis; ubiquinone biosynthesis. In terms of biological role, catalyzes the decarboxylation of 3-octaprenyl-4-hydroxy benzoate to 2-octaprenylphenol, an intermediate step in ubiquinone biosynthesis. The sequence is that of 3-octaprenyl-4-hydroxybenzoate carboxy-lyase from Shewanella amazonensis (strain ATCC BAA-1098 / SB2B).